Consider the following 605-residue polypeptide: Probable potassium transport system protein Kup 1 (605 aa).

The next 12 membrane-spanning stretches (helical) occupy residues alanine 16 to phenylalanine 36, valine 46 to alanine 66, valine 97 to isoleucine 117, glycine 138 to valine 158, valine 166 to valine 186, glycine 212 to leucine 232, tryptophan 248 to threonine 268, leucine 287 to isoleucine 307, isoleucine 339 to phenylalanine 359, alanine 368 to phenylalanine 388, alanine 397 to lysine 417, and isoleucine 418 to isoleucine 438.

This sequence belongs to the HAK/KUP transporter (TC 2.A.72) family.

The protein localises to the cell inner membrane. It catalyses the reaction K(+)(in) + H(+)(in) = K(+)(out) + H(+)(out). Its function is as follows. Transport of potassium into the cell. Likely operates as a K(+):H(+) symporter. The polypeptide is Probable potassium transport system protein Kup 1 (Geobacter metallireducens (strain ATCC 53774 / DSM 7210 / GS-15)).